The following is a 347-amino-acid chain: Ultraviolet-sensitive opsin (347 aa).

Over 1 to 37 (MSGEEEFYLFKNGSIGGPWDGPQYHIAPPWAFYLQTA) the chain is Extracellular. N-linked (GlcNAc...) asparagine glycosylation is present at Asn12. Residues 38–58 (FMGFVFMVGTPLNAIVLVVTI) traverse the membrane as a helical segment. Residues 59–69 (KYKKLRQPLNY) are Cytoplasmic-facing. The helical transmembrane segment at 70–90 (ILVNISFCGFLACIICIFTVF) threads the bilayer. The Extracellular portion of the chain corresponds to 91–106 (VSSSQGYFVFGKHVCA). Cys105 and Cys182 are oxidised to a cystine. A helical transmembrane segment spans residues 107–127 (FEGFMGATAGLVTGWSLAFLA). Residues 128 to 147 (FERYIVICKPLGNFRFTAKH) lie on the Cytoplasmic side of the membrane. Residues 148–168 (ALVVVVATWVIGIGVAIPPFF) traverse the membrane as a helical segment. The Extracellular portion of the chain corresponds to 169 to 197 (GWSRYVPEGLQCSCGPDWYTVGTKYRSEY). Residues 198 to 218 (YTWFLFIFCFIVPLSLIIFSY) traverse the membrane as a helical segment. Residues 219-247 (SQLLSALRAVAAQQQESATTQKAEREVSR) lie on the Cytoplasmic side of the membrane. The helical transmembrane segment at 248 to 268 (MVVVMVGSFCVCYVPYAALAM) threads the bilayer. Residues 269 to 282 (YMVNNREHGIDLRL) are Extracellular-facing. Residues 283–303 (VTIPAFFSKSSCVYNPIIYCF) form a helical membrane-spanning segment. Lys291 is subject to N6-(retinylidene)lysine. The Cytoplasmic portion of the chain corresponds to 304-347 (MNKQFRGCIMEMVCGKPMTDDSDMSSSAQRTEVSSVSSSQVSPS). Residue Cys317 is the site of S-palmitoyl cysteine attachment. Residues 324–347 (DSDMSSSAQRTEVSSVSSSQVSPS) are disordered. Positions 328 to 347 (SSSAQRTEVSSVSSSQVSPS) are enriched in low complexity.

Belongs to the G-protein coupled receptor 1 family. Opsin subfamily. Phosphorylated on some or all of the serine and threonine residues present in the C-terminal region. In terms of tissue distribution, cone photoreceptor cells.

It localises to the membrane. Its function is as follows. Visual pigments are the light-absorbing molecules that mediate vision. They consist of an apoprotein, opsin, covalently linked to cis-retinal. The protein is Ultraviolet-sensitive opsin of Melopsittacus undulatus (Budgerigar).